We begin with the raw amino-acid sequence, 242 residues long: NAD-dependent protein deacetylase 1 (242 aa).

Residues 1 to 242 (MTITSWLAAS…LNEQLAEVDP (242 aa)) enclose the Deacetylase sirtuin-type domain. NAD(+) is bound by residues Ala19, Thr23, Phe30, Arg31, Gln97, Val99, Asp100, and His115. Phe30 is a binding site for nicotinamide. 2 residues coordinate nicotinamide: Val99 and Asp100. The active-site Proton acceptor is His115. 4 residues coordinate Zn(2+): Cys123, Cys126, Cys142, and Cys144. Ser182, Ser183, Asn207, and Ile226 together coordinate NAD(+).

Belongs to the sirtuin family. Class U subfamily. Zn(2+) serves as cofactor.

The protein localises to the cytoplasm. The catalysed reaction is N(6)-acetyl-L-lysyl-[protein] + NAD(+) + H2O = 2''-O-acetyl-ADP-D-ribose + nicotinamide + L-lysyl-[protein]. In terms of biological role, NAD-dependent protein deacetylase which modulates the activities of several enzymes which are inactive in their acetylated form. This Geobacillus kaustophilus (strain HTA426) protein is NAD-dependent protein deacetylase 1.